The following is a 284-amino-acid chain: Pantothenate synthetase (284 aa).

34–41 (MGALHAGH) lines the ATP pocket. His-41 functions as the Proton donor in the catalytic mechanism. Gln-65 serves as a coordination point for (R)-pantoate. Gln-65 contributes to the beta-alanine binding site. Position 151 to 154 (151 to 154 (GEKD)) interacts with ATP. Gln-157 contacts (R)-pantoate. ATP is bound by residues Leu-180 and 188–191 (MSSR).

Belongs to the pantothenate synthetase family. In terms of assembly, homodimer.

It localises to the cytoplasm. It carries out the reaction (R)-pantoate + beta-alanine + ATP = (R)-pantothenate + AMP + diphosphate + H(+). It functions in the pathway cofactor biosynthesis; (R)-pantothenate biosynthesis; (R)-pantothenate from (R)-pantoate and beta-alanine: step 1/1. Catalyzes the condensation of pantoate with beta-alanine in an ATP-dependent reaction via a pantoyl-adenylate intermediate. The sequence is that of Pantothenate synthetase from Paramagnetospirillum magneticum (strain ATCC 700264 / AMB-1) (Magnetospirillum magneticum).